Reading from the N-terminus, the 139-residue chain is Small ribosomal subunit protein bS6 (139 aa).

Residues 97-139 (TEASPMAKAKDERDSRRSSEGERRSAPAEATEEVKETAEKAAE) form a disordered region. Over residues 104-139 (KAKDERDSRRSSEGERRSAPAEATEEVKETAEKAAE) the composition is skewed to basic and acidic residues.

This sequence belongs to the bacterial ribosomal protein bS6 family.

In terms of biological role, binds together with bS18 to 16S ribosomal RNA. The chain is Small ribosomal subunit protein bS6 from Shewanella sediminis (strain HAW-EB3).